Reading from the N-terminus, the 63-residue chain is Large ribosomal subunit protein bL35 (63 aa).

This sequence belongs to the bacterial ribosomal protein bL35 family.

This chain is Large ribosomal subunit protein bL35, found in Finegoldia magna (strain ATCC 29328 / DSM 20472 / WAL 2508) (Peptostreptococcus magnus).